Reading from the N-terminus, the 154-residue chain is Troponin C, isoform 1 (154 aa).

4 consecutive EF-hand domains span residues 8 to 43, 44 to 79, 84 to 119, and 120 to 154; these read EQTALLRNAFNAFDPEKNGYINTAMVGTILSMLGHQ, LDDATLADIIAEVDEDGSGQIEFEEFTTLAARFLVE, AMMAELKEAFRLYDKEGNGYITTGVLREILRELDDK, and LTNDDLDMMIEEIDSDGSGTVDFDEFMEVMTGGDD. D57, D59, S61, Q63, and E68 together coordinate Ca(2+). D133, D135, S137, T139, and E144 together coordinate Ca(2+).

It belongs to the troponin C family. As to expression, present only in adult muscles.

The protein is Troponin C, isoform 1 (TpnC41C) of Drosophila melanogaster (Fruit fly).